The chain runs to 337 residues: Glyceraldehyde-3-phosphate dehydrogenase 3, cytosolic (337 aa).

The segment at 1-151 (MAKIKIGING…YKSDINIVSN (151 aa)) is binding to NAD. Residues 13–14 (RI), aspartate 35, and arginine 82 each bind NAD(+). The segment at 152–337 (ASCTTNCLAP…DLIRHMNSTK (186 aa)) is catalytic. Residues 153 to 155 (SCT), threonine 184, 213 to 214 (TG), and arginine 236 contribute to the D-glyceraldehyde 3-phosphate site. Residue cysteine 154 is the Nucleophile of the active site. NAD(+) is bound at residue asparagine 318.

It belongs to the glyceraldehyde-3-phosphate dehydrogenase family. As to quaternary structure, homotetramer.

The protein resides in the cytoplasm. The catalysed reaction is D-glyceraldehyde 3-phosphate + phosphate + NAD(+) = (2R)-3-phospho-glyceroyl phosphate + NADH + H(+). It functions in the pathway carbohydrate degradation; glycolysis; pyruvate from D-glyceraldehyde 3-phosphate: step 1/5. Its function is as follows. Key enzyme in glycolysis that catalyzes the first step of the pathway by converting D-glyceraldehyde 3-phosphate (G3P) into 3-phospho-D-glyceroyl phosphate. Essential for the maintenance of cellular ATP levels and carbohydrate metabolism. In Zea mays (Maize), this protein is Glyceraldehyde-3-phosphate dehydrogenase 3, cytosolic (GAPC3).